Reading from the N-terminus, the 365-residue chain is uncharacterized protein (365 aa).

It belongs to the mycobacterial PPE family.

This is an uncharacterized protein from Mycobacterium tuberculosis (strain ATCC 25618 / H37Rv).